The chain runs to 493 residues: Inosine-5'-monophosphate dehydrogenase (493 aa).

2 CBS domains span residues 97 to 155 (VIID…NAPI) and 159 to 219 (MTSE…AKDE). NAD(+) is bound by residues Asp253 and 303–305 (GIG). Residues Gly305 and Gly307 each coordinate K(+). Ser308 provides a ligand contact to IMP. A K(+)-binding site is contributed by Cys310. Cys310 serves as the catalytic Thioimidate intermediate. IMP-binding positions include 343–345 (DGG), 366–367 (GS), and 390–394 (YRGMG). Arg406 serves as the catalytic Proton acceptor. Glu421 lines the IMP pocket. The K(+) site is built by Glu475, Ser476, and His477.

This sequence belongs to the IMPDH/GMPR family. As to quaternary structure, homotetramer. K(+) is required as a cofactor.

The enzyme catalyses IMP + NAD(+) + H2O = XMP + NADH + H(+). Its pathway is purine metabolism; XMP biosynthesis via de novo pathway; XMP from IMP: step 1/1. Mycophenolic acid (MPA) is a non-competitive inhibitor that prevents formation of the closed enzyme conformation by binding to the same site as the amobile flap. In contrast, mizoribine monophosphate (MZP) is a competitive inhibitor that induces the closed conformation. MPA is a potent inhibitor of mammalian IMPDHs but a poor inhibitor of the bacterial enzymes. MZP is a more potent inhibitor of bacterial IMPDH. In terms of biological role, catalyzes the conversion of inosine 5'-phosphate (IMP) to xanthosine 5'-phosphate (XMP), the first committed and rate-limiting step in the de novo synthesis of guanine nucleotides, and therefore plays an important role in the regulation of cell growth. The protein is Inosine-5'-monophosphate dehydrogenase of Streptococcus pyogenes serotype M3 (strain ATCC BAA-595 / MGAS315).